Reading from the N-terminus, the 123-residue chain is Galanin peptides (123 aa).

The signal sequence occupies residues 1–19; the sequence is MPRGSVLLLASLLLAAALS. The propeptide occupies 20–30; it reads ATLGLGSPVKE. Residues 53–66 are compositionally biased toward basic and acidic residues; sequence SFQDKHGLAGKREL. Positions 53–79 are disordered; that stretch reads SFQDKHGLAGKRELEPEDEARPGSFDR. Position 61 is an alanine amide (Ala-61). A Phosphoserine modification is found at Ser-116.

Belongs to the galanin family.

The protein localises to the secreted. Endocrine hormone of the central and peripheral nervous systems that binds and activates the G protein-coupled receptors GALR1, GALR2, and GALR3. This small neuropeptide may regulate diverse physiologic functions including contraction of smooth muscle of the gastrointestinal and genitourinary tract, growth hormone and insulin release and adrenal secretion. The chain is Galanin peptides (GAL) from Bos taurus (Bovine).